A 542-amino-acid polypeptide reads, in one-letter code: 2,3-bisphosphoglycerate-independent phosphoglycerate mutase (542 aa).

Residues aspartate 13 and serine 63 each coordinate Mn(2+). Serine 63 (phosphoserine intermediate) is an active-site residue. Substrate contacts are provided by residues histidine 124, 154 to 155, arginine 186, arginine 192, 263 to 266, and lysine 357; these read RD and RADR. Positions 424, 428, 465, 466, and 484 each coordinate Mn(2+).

The protein belongs to the BPG-independent phosphoglycerate mutase family. As to quaternary structure, monomer. Mn(2+) is required as a cofactor.

The enzyme catalyses (2R)-2-phosphoglycerate = (2R)-3-phosphoglycerate. It functions in the pathway carbohydrate degradation; glycolysis; pyruvate from D-glyceraldehyde 3-phosphate: step 3/5. Functionally, catalyzes the interconversion of 2-phosphoglycerate and 3-phosphoglycerate. The polypeptide is 2,3-bisphosphoglycerate-independent phosphoglycerate mutase (Herpetosiphon aurantiacus (strain ATCC 23779 / DSM 785 / 114-95)).